We begin with the raw amino-acid sequence, 362 residues long: C-C chemokine receptor type 10 (362 aa).

The Extracellular segment spans residues 1–52 (MGTEATEQVSWGHYSGDEEDAYSAEPLPELCYKADVQAFSRAFQPSVSLTVA). Residues 53–68 (ALGLAGNGLVLATHLA) traverse the membrane as a helical segment. Residues 69 to 78 (ARRAARSPTS) are Cytoplasmic-facing. The chain crosses the membrane as a helical span at residues 79 to 99 (AHLLQLALADLLLALTLPFAA). Over 100–114 (AGALQGWSLGSATCR) the chain is Extracellular. A disulfide bridge connects residues cysteine 113 and cysteine 191. Residues 115–136 (TISGLYSASFHAGFLFLACISA) form a helical membrane-spanning segment. Topologically, residues 137–159 (DRYVAIARALPAGPRPSTPGRAH) are cytoplasmic. Residues 160 to 179 (LVSVIVWLLSLLLALPALLF) traverse the membrane as a helical segment. Topologically, residues 180-203 (SQDGQREGQRRCRLIFPEGLTQTV) are extracellular. The chain crosses the membrane as a helical span at residues 204-225 (KGASAVAQVALGFALPLGVMVA). Topologically, residues 226-247 (CYALLGRTLLAARGPERRRALR) are cytoplasmic. Residues 248 to 269 (VVVALVAAFVVLQLPYSLALLL) traverse the membrane as a helical segment. Residues 270–290 (DTADLLAARERSCPASKRKDV) are Extracellular-facing. Residues 291–313 (ALLVTSGLALARCGLNPVLYAFL) traverse the membrane as a helical segment. Residues 314 to 362 (GLRFRQDLRRLLRGGSCPSGPQPRRGCPRRPRLSSCSAPTETHSLSWDN) lie on the Cytoplasmic side of the membrane. The segment covering 328-338 (GSCPSGPQPRR) has biased composition (low complexity). A disordered region spans residues 328 to 362 (GSCPSGPQPRRGCPRRPRLSSCSAPTETHSLSWDN). The segment covering 351–362 (APTETHSLSWDN) has biased composition (polar residues).

Belongs to the G-protein coupled receptor 1 family. As to expression, expressed at high levels in adult testis, small intestine, fetal lung, fetal kidney. Weaker expression was observed in many other adult tissues including spleen, thymus, lymph node, Peyer patches, colon, heart, ovary, peripheral blood lymphocytes, thyroid and spinal cord. Also expressed by melanocytes, dermal fibroblasts, dermal microvascular endothelial cells. Also detected in T-cells and in skin-derived Langerhans cells.

It is found in the cell membrane. Its function is as follows. Receptor for chemokines SCYA27 and SCYA28. Subsequently transduces a signal by increasing the intracellular calcium ions level and stimulates chemotaxis in a pre-B cell line. The polypeptide is C-C chemokine receptor type 10 (CCR10) (Homo sapiens (Human)).